The following is a 148-amino-acid chain: Lysozyme C (148 aa).

The first 18 residues, 1-18 (MKAPLLLGLLLLSVTVQG), serve as a signal peptide directing secretion. A C-type lysozyme domain is found at 19–148 (KVFERCDLAR…VSQYVRNCGV (130 aa)). Disulfide bonds link C24-C146, C48-C134, C83-C99, and C95-C113. Catalysis depends on residues E53 and D71.

Belongs to the glycosyl hydrolase 22 family. Monomer.

Its subcellular location is the secreted. It catalyses the reaction Hydrolysis of (1-&gt;4)-beta-linkages between N-acetylmuramic acid and N-acetyl-D-glucosamine residues in a peptidoglycan and between N-acetyl-D-glucosamine residues in chitodextrins.. Its function is as follows. Lysozymes have primarily a bacteriolytic function; those in tissues and body fluids are associated with the monocyte-macrophage system and enhance the activity of immunoagents. This is Lysozyme C (LYZ) from Leptonychotes weddellii (Weddell seal).